The primary structure comprises 156 residues: Nascent polypeptide-associated complex subunit beta (156 aa).

Disordered stretches follow at residues 1–42 (MPID…KDDT) and 129–156 (QANENAGEAKDEAIPELVEGQSFDAEVE). The NAC-A/B domain occupies 38–103 (NKDDTKLHNQ…AQEKNLQELF (66 aa)).

This sequence belongs to the NAC-beta family. As to quaternary structure, part of the nascent polypeptide-associated complex (NAC), consisting of EGD2 and EGD1. NAC associates with ribosomes via EGD1.

The protein resides in the cytoplasm. Its subcellular location is the nucleus. Functionally, component of the nascent polypeptide-associated complex (NAC), a dynamic component of the ribosomal exit tunnel, protecting the emerging polypeptides from interaction with other cytoplasmic proteins to ensure appropriate nascent protein targeting. The NAC complex also promotes mitochondrial protein import by enhancing productive ribosome interactions with the outer mitochondrial membrane and blocks the inappropriate interaction of ribosomes translating non-secretory nascent polypeptides with translocation sites in the membrane of the endoplasmic reticulum. EGD1 may act as a transcription factor that exert a negative effect on the expression of several genes that are transcribed by RNA polymerase II. The protein is Nascent polypeptide-associated complex subunit beta (EGD1) of Candida glabrata (strain ATCC 2001 / BCRC 20586 / JCM 3761 / NBRC 0622 / NRRL Y-65 / CBS 138) (Yeast).